Reading from the N-terminus, the 301-residue chain is HPr kinase/phosphorylase (301 aa).

Residues H134 and K155 contribute to the active site. 149–156 (GKSGLGKS) serves as a coordination point for ATP. Residue S156 coordinates Mg(2+). D173 serves as the catalytic Proton acceptor; for phosphorylation activity. Proton donor; for dephosphorylation activity. An important for the catalytic mechanism of both phosphorylation and dephosphorylation region spans residues 196–205 (LEVRGLGIIN). Residue E197 coordinates Mg(2+). R239 is a catalytic residue. The interval 260-265 (PITPGK) is important for the catalytic mechanism of dephosphorylation.

Belongs to the HPrK/P family. In terms of assembly, homohexamer. Mg(2+) is required as a cofactor.

It carries out the reaction [HPr protein]-L-serine + ATP = [HPr protein]-O-phospho-L-serine + ADP + H(+). The catalysed reaction is [HPr protein]-O-phospho-L-serine + phosphate + H(+) = [HPr protein]-L-serine + diphosphate. Its function is as follows. Catalyzes the ATP- as well as the pyrophosphate-dependent phosphorylation of a specific serine residue in HPr, a phosphocarrier protein of the phosphoenolpyruvate-dependent sugar phosphotransferase system (PTS). HprK/P also catalyzes the pyrophosphate-producing, inorganic phosphate-dependent dephosphorylation (phosphorolysis) of seryl-phosphorylated HPr (P-Ser-HPr). The two antagonistic activities of HprK/P are regulated by several intracellular metabolites, which change their concentration in response to the absence or presence of rapidly metabolisable carbon sources (glucose, fructose, etc.) in the growth medium. Therefore, by controlling the phosphorylation state of HPr, HPrK/P is a sensor enzyme that plays a major role in the regulation of carbon metabolism and sugar transport: it mediates carbon catabolite repression (CCR), and regulates PTS-catalyzed carbohydrate uptake and inducer exclusion. This chain is HPr kinase/phosphorylase, found in Malacoplasma penetrans (strain HF-2) (Mycoplasma penetrans).